The following is a 3130-amino-acid chain: Reticulocyte-binding protein homolog 2a (3130 aa).

Residues 1–24 form the signal peptide; it reads MKTTLFCSISFCNIIFFFLELSHE. Topologically, residues 25–3066 are extracellular; sequence HFVGQSSNTH…FSRSKNLSVA (3042 aa). Residues Asn43, Asn105, Asn123, and Asn159 are each glycosylated (N-linked (GlcNAc...) asparagine). LRR repeat units follow at residues 182–206, 300–323, and 419–443; these read FTTS…EKFN, VMNN…LYLN, and ISKL…IFNI. An erythrocyte binding domain (EBD) region spans residues 446-557; that stretch reads KKYETYVDMK…SLNNYIEKTD (112 aa). Residues 490–517 are a coiled coil; it reads KANLDSEVVKLQIKINEKSNELDNAISQ. Residues Asn575, Asn579, Asn635, Asn675, Asn724, and Asn745 are each glycosylated (N-linked (GlcNAc...) asparagine). One copy of the LRR 4 repeat lies at 659–683; the sequence is LNSLNLININDFINEKNISQEKVSY. The LRR 5 repeat unit spans residues 757–778; it reads LSHLLSLKENIIKKLLNHIEQN. Asn781 carries an N-linked (GlcNAc...) asparagine glycan. The stretch at 801 to 824 is one LRR 6 repeat; sequence KEEIESLEVYKHTIGNIQKEYILH. Asn837 and Asn994 each carry an N-linked (GlcNAc...) asparagine glycan. The stretch at 1116-1139 is one LRR 7 repeat; the sequence is LTKLKSIHFNIDKEKYKNPKSQEN. Residue Asn1166 is glycosylated (N-linked (GlcNAc...) asparagine). Positions 1173 to 1185 are enriched in basic and acidic residues; the sequence is VNADNEKKKQKEK. A disordered region spans residues 1173-1195; that stretch reads VNADNEKKKQKEKEEDDEQTHYS. The stretch at 1305-1328 is one LRR 8 repeat; it reads FDKLKDLYENINKLTNESNGLKSD. N-linked (GlcNAc...) asparagine glycosylation is found at Asn1320 and Asn1332. An LRR 9 repeat occupies 1336-1362; the sequence is VDKLKEINLQVFSNLGNIIKYVEKLEN. 2 N-linked (GlcNAc...) asparagine glycosylation sites follow: Asn1398 and Asn1409. One copy of the LRR 10 repeat lies at 1438-1461; sequence DDNIKSLVLKKEEISEKRKQVNKY. The N-linked (GlcNAc...) asparagine glycan is linked to Asn1513. LRR repeat units follow at residues 1536 to 1561 and 1628 to 1652; these read IIKI…KYEK and SNLL…DYMN. 3 N-linked (GlcNAc...) asparagine glycosylation sites follow: Asn1705, Asn1742, and Asn1785. 2 LRR repeats span residues 1795-1818 and 1890-1913; these read MTEI…AQTE and LDSL…TNKE. Residues 1805-1842 adopt a coiled-coil conformation; it reads YNEIKEIKEVAQTEYDKLNKKVDELKNYLNNIKEQEGH. N-linked (GlcNAc...) asparagine glycosylation is found at Asn1900, Asn1927, and Asn1971. 2 LRR repeats span residues 2014 to 2041 and 2052 to 2076; these read IQKL…LYDL and ENDI…QYNF. Asn2113 is a glycosylation site (N-linked (GlcNAc...) asparagine). One copy of the LRR 17 repeat lies at 2126 to 2152; the sequence is LDELEKSLTLSSNEMEIKTIVQNSYNS. N-linked (GlcNAc...) asparagine glycosylation is found at Asn2212, Asn2268, Asn2346, Asn2421, Asn2456, Asn2473, Asn2484, Asn2537, and Asn2550. 2 LRR repeats span residues 2345–2368 and 2409–2434; these read INET…INDK and NVEL…TFIK. The LRR 20 repeat unit spans residues 2522–2545; that stretch reads LFQMEEMLLNINNIMNETKRISNT. 2 LRR repeats span residues 2572–2599 and 2650–2671; these read IDKL…AKRK and LNEL…KLIL. Residues 2661–2874 adopt a coiled-coil conformation; that stretch reads IKDLGDEKLI…KIELAEREQH (214 aa). The disordered stretch occupies residues 2680–2753; the sequence is RERLEKAKQE…QERLQKEEEL (74 aa). 2 LRR repeats span residues 2915–2936 and 2937–2959; these read LKHL…NDEV and IKDN…LYLN. Residues Asn2940, Asn2986, and Asn3015 are each glycosylated (N-linked (GlcNAc...) asparagine). The segment at 3021–3056 is disordered; it reads ITSKEKKDETESTKRSGTDHTNSSESTTDDNTNDRN. Residues 3023–3038 are compositionally biased toward basic and acidic residues; it reads SKEKKDETESTKRSGT. Residues 3039–3050 show a composition bias toward low complexity; sequence DHTNSSESTTDD. Asn3042, Asn3056, and Asn3062 each carry an N-linked (GlcNAc...) asparagine glycan. Residues 3067 to 3087 traverse the membrane as a helical segment; it reads IYTAGSVALCVLIFSSIGLLL. Over 3088-3130 the chain is Cytoplasmic; it reads IKTNSGDNNSNEINEAFEPNDDVLFKEKDEIIEITFNDNDSTI.

Forms a heterodimer composed of the 285 kDa and the 85 kDa forms. Proteolytically processed into multiple fragments following schizont rupture. In the mature schizont stage prior to merozoite release, full length RH2b is processed post-Golgi into C-terminal 285 kDa and N-terminal 85 kDa forms. During merozoite invasion of host erythrocytes, further processing occurs generating a 140 kDa C-terminal form. At the same time, the C-terminal transmembrane region is probably cleaved, probably by a rhomboid protease, to shed all the different processed protein forms from the membrane leaving a transmembrane 7 kDa form on the merozoite surface.

The protein resides in the cell membrane. The protein localises to the cytoplasmic vesicle. It localises to the secretory vesicle. Its subcellular location is the rhoptry. It is found in the secreted. The protein resides in the cell junction. The protein localises to the tight junction. Its function is as follows. During the asexual blood stage, binds to a chymotrypsin sensitive, neuraminidase and trypsin resistant receptor on the surface of the host erythrocyte. Despite its binding capacity, appears to be dispensable for merozoite invasion of host erythrocytes. Functionally, during the asexual blood stage, binds to a trypsin-resistant and chymotrypsin and neuraminidase sensitive receptor on the surface of the host erythrocyte. The protein is Reticulocyte-binding protein homolog 2a of Plasmodium falciparum (isolate 3D7).